Here is a 317-residue protein sequence, read N- to C-terminus: Phospholipase A1 1 (317 aa).

An N-terminal signal peptide occupies residues 1–7 (RLIMFVG). Positions 8 to 17 (DPSSSNELDR) are excised as a propeptide. A disulfide bridge links Cys-21 with Cys-104. Asn-25 carries N-linked (GlcNAc...) asparagine glycosylation. Ser-154 serves as the catalytic Nucleophile. The active-site Charge relay system is the Asp-182. Cys-193 and Cys-198 are joined by a disulfide. Asn-229 carries an N-linked (GlcNAc...) asparagine glycan. Cysteines 236 and 244 form a disulfide. The active-site Charge relay system is His-246. 3 disulfides stabilise this stretch: Cys-261/Cys-285, Cys-262/Cys-310, and Cys-278/Cys-283.

Belongs to the AB hydrolase superfamily. Lipase family. In terms of tissue distribution, expressed by the venom gland.

The protein resides in the secreted. It carries out the reaction a 1,2-diacyl-sn-glycero-3-phosphocholine + H2O = a 2-acyl-sn-glycero-3-phosphocholine + a fatty acid + H(+). In terms of biological role, catalyzes the hydrolysis of phosphatidylcholine with phospholipase A1 activity. May act as an allergen and induce hemolytic activity. This chain is Phospholipase A1 1, found in Dolichovespula maculata (Bald-faced hornet).